The primary structure comprises 207 residues: Guanylate kinase (207 aa).

A Guanylate kinase-like domain is found at 5 to 184; sequence GNLFIVSAPS…ALADLVAIIR (180 aa). 12 to 19 serves as a coordination point for ATP; it reads APSGAGKS.

This sequence belongs to the guanylate kinase family.

It is found in the cytoplasm. The catalysed reaction is GMP + ATP = GDP + ADP. Essential for recycling GMP and indirectly, cGMP. The polypeptide is Guanylate kinase (Shewanella violacea (strain JCM 10179 / CIP 106290 / LMG 19151 / DSS12)).